A 473-amino-acid chain; its full sequence is FAD-dependent monooxygeanse terM (473 aa).

The signal sequence occupies residues 1-22 (MSENFKVLIIGGSVAGLTLALC). FAD-binding residues include glutamate 34, glycine 48, arginine 107, aspartate 303, and alanine 316. Residues 441–461 (VLYLICGALLAWWASGLVWHF) traverse the membrane as a helical segment.

It belongs to the paxM FAD-dependent monooxygenase family. It depends on FAD as a cofactor.

Its subcellular location is the membrane. It functions in the pathway secondary metabolite biosynthesis. FAD-dependent monooxygeanse; part of the gene cluster that mediates the biosynthesis of terpendoles, indole-diterpene (IDT) mycotoxins including terpendole I, terpendole K, terpendole C, as well as the kinesin Eg5 inhibitor terpendole E. Terpendoles biosynthesis begins with the synthesis of geranylgeranyl diphosphate (GGPP) by a yet unidentified GGPP synthase. Condensation of indole-3-glycerol phosphate with GGPP by the prenyltransferase terC then forms 3-geranylgeranylindole (3-GGI), followed by epoxidation and cyclization of this intermediate (by the FAD-dependent monooxygeanse terM and the terpene cyclase terB) to form paspaline. The cytochrome monooxygenase terQ then hydroxylates paspalline at C-11 to yield terpendole E. The cytochrome monooxygenase terP converts terpendole E to 13-desoxyterpendole I, and terQ converts 13-desoxyterpendole I into terpendole I. TerF and terK are required for conversion of terpendole I to terpendole C which is further converted to terpendole K. The polypeptide is FAD-dependent monooxygeanse terM (Tolypocladium album (Soil fungus)).